Consider the following 324-residue polypeptide: Homeobox protein Nkx-2.5 (324 aa).

Residues 138 to 197 constitute a DNA-binding region (homeobox); it reads RRKPRVLFSQAQVYELERRFKQQRYLSAPERDQLASVLKLTSTQVKIWFQNRRYKCKRQR.

It belongs to the NK-2 homeobox family. Homodimer (via the homeobox); binds DNA as homodimer. Interacts (via the homeobox) with TBX5 (via the T-box); this complex binds DNA. Interacts with HIPK1 and HIPK2, but not HIPK3. Interacts with the C-terminal zinc finger of GATA4 through its homeobox domain. Also interacts with JARID2 which represses its ability to activate transcription of ANF. Interacts with FBLIM1. Interacts with TBX18. Interacts with histone methyltransferase NSD2 (via HMG box). Interacts with NEDD9. Interacts with TBX1. Expressed only in the heart.

The protein resides in the nucleus. Its function is as follows. Transcription factor required for the development of the heart and the spleen. During heart development, acts as a transcriptional activator of NPPA/ANF in cooperation with GATA4. May cooperate with TBX2 to negatively modulate expression of NPPA/ANF in the atrioventricular canal. Binds to the core DNA motif of NPPA promoter. Together with PBX1, required for spleen development through a mechanism that involves CDKN2B repression. Positively regulates transcription of genes such as COL3A1 and MMP2, resulting in increased pulmonary endothelial fibrosis in response to hypoxia. The protein is Homeobox protein Nkx-2.5 (NKX2-5) of Homo sapiens (Human).